A 210-amino-acid polypeptide reads, in one-letter code: Large ribosomal subunit protein uL4 (210 aa).

A disordered region spans residues 44 to 79; it reads QHQGTHKVKTRSEVSGGGRKPYRQKGTGNARRGSSR.

Belongs to the universal ribosomal protein uL4 family. In terms of assembly, part of the 50S ribosomal subunit.

Its function is as follows. One of the primary rRNA binding proteins, this protein initially binds near the 5'-end of the 23S rRNA. It is important during the early stages of 50S assembly. It makes multiple contacts with different domains of the 23S rRNA in the assembled 50S subunit and ribosome. Functionally, forms part of the polypeptide exit tunnel. In Chloroherpeton thalassium (strain ATCC 35110 / GB-78), this protein is Large ribosomal subunit protein uL4.